The sequence spans 287 residues: ATP synthase gamma chain (287 aa).

Belongs to the ATPase gamma chain family. In terms of assembly, F-type ATPases have 2 components, CF(1) - the catalytic core - and CF(0) - the membrane proton channel. CF(1) has five subunits: alpha(3), beta(3), gamma(1), delta(1), epsilon(1). CF(0) has three main subunits: a, b and c.

The protein resides in the cell inner membrane. Its function is as follows. Produces ATP from ADP in the presence of a proton gradient across the membrane. The gamma chain is believed to be important in regulating ATPase activity and the flow of protons through the CF(0) complex. This Escherichia coli (strain 55989 / EAEC) protein is ATP synthase gamma chain.